Reading from the N-terminus, the 210-residue chain is NADH dehydrogenase [ubiquinone] iron-sulfur protein 8, mitochondrial (210 aa).

The transit peptide at 1-34 directs the protein to the mitochondrion; sequence MRCLTMPTLLRALAQAAHTGPPGGRTLHSSAVAA. 2 4Fe-4S ferredoxin-type domains span residues 102-131 and 141-170; these read RRYPSGEERCIACKLCEAVCPAQAITIEAE and TRYDIDMTKCIYCGFCQEACPVDAIVEGPN. Residues Cys-111, Cys-114, Cys-117, Cys-121, Cys-150, Cys-153, Cys-156, and Cys-160 each coordinate [4Fe-4S] cluster.

The protein belongs to the complex I 23 kDa subunit family. Core subunit of respiratory chain NADH dehydrogenase (Complex I) which is composed of 45 different subunits. This is a component of the iron-sulfur (IP) fragment of the enzyme. Interacts with RAB5IF. [4Fe-4S] cluster is required as a cofactor.

It is found in the mitochondrion inner membrane. It catalyses the reaction a ubiquinone + NADH + 5 H(+)(in) = a ubiquinol + NAD(+) + 4 H(+)(out). Functionally, core subunit of the mitochondrial membrane respiratory chain NADH dehydrogenase (Complex I) which catalyzes electron transfer from NADH through the respiratory chain, using ubiquinone as an electron acceptor. Essential for the catalytic activity and assembly of complex I. This Macaca fascicularis (Crab-eating macaque) protein is NADH dehydrogenase [ubiquinone] iron-sulfur protein 8, mitochondrial (NDUFS8).